The chain runs to 233 residues: Phosphoribosylformylglycinamidine synthase subunit PurQ (233 aa).

The Glutamine amidotransferase type-1 domain maps to 3–233; that stretch reads SAVLVFPGIN…GLVEHLKTAA (231 aa). Cys-87 (nucleophile) is an active-site residue. Active-site residues include His-204 and Glu-206.

Part of the FGAM synthase complex composed of 1 PurL, 1 PurQ and 2 PurS subunits.

The protein localises to the cytoplasm. It carries out the reaction N(2)-formyl-N(1)-(5-phospho-beta-D-ribosyl)glycinamide + L-glutamine + ATP + H2O = 2-formamido-N(1)-(5-O-phospho-beta-D-ribosyl)acetamidine + L-glutamate + ADP + phosphate + H(+). It catalyses the reaction L-glutamine + H2O = L-glutamate + NH4(+). Its pathway is purine metabolism; IMP biosynthesis via de novo pathway; 5-amino-1-(5-phospho-D-ribosyl)imidazole from N(2)-formyl-N(1)-(5-phospho-D-ribosyl)glycinamide: step 1/2. Its function is as follows. Part of the phosphoribosylformylglycinamidine synthase complex involved in the purines biosynthetic pathway. Catalyzes the ATP-dependent conversion of formylglycinamide ribonucleotide (FGAR) and glutamine to yield formylglycinamidine ribonucleotide (FGAM) and glutamate. The FGAM synthase complex is composed of three subunits. PurQ produces an ammonia molecule by converting glutamine to glutamate. PurL transfers the ammonia molecule to FGAR to form FGAM in an ATP-dependent manner. PurS interacts with PurQ and PurL and is thought to assist in the transfer of the ammonia molecule from PurQ to PurL. The protein is Phosphoribosylformylglycinamidine synthase subunit PurQ of Rhodopseudomonas palustris (strain HaA2).